Here is a 206-residue protein sequence, read N- to C-terminus: MELRAYTVLDALQPQLVAFLQTVSTGFMPMEQQASVLVEIAPGIAVNQLTDAALKATRCQPGLQIVERAYGLIEMHDDDQGQVRAAGDAMLAHLGAREADRLAPRVVSSQIITGIDGHQSQLINRMRHGDMIQAGQTLYILEVHPAGYAALAANEAEKAAPIKLLEVVTFGAFGRLWLGGGEAEIAEAARAAEGALAGLSGRDNRG.

BMC circularly permuted domains follow at residues 2–104 (ELRA…RLAP) and 105–206 (RVVS…DNRG). The Pore gating residues motif lies at 67–68 (ER).

This sequence belongs to the EutL/PduB family. Homotrimerizes to form a pseudohexamer. These stack, with the concave faces together, with the concave faces together, in purified bacterial microcompartments (BMC).

It localises to the bacterial microcompartment. Functionally, a minor component of the bacterial microcompartment (BMC) shell. Expression of 5 proteins in E.coli (BMC-H (Hoch_5815), BMC-P (Hoch_5814), and 3 BMC-T (Hoch_5812, Hoch_5816, Hoch_3341)) forms 40 nm artificial BMCs with a molecular mass of 6.5 MDa. One of 2 stacked pseudohexamers in the BMC. There are 20 BMC-T pseudohexamers per BMC, composed of mixed BMC-T1, BMC-T2 and BMC-T3. The shell facets are 20-30 Angstroms thick, with 1 of the stacked BMC-T trimers protruding to the exterior. The stacked trimers may serve as conduits to allow metabolite flux across the protein shell, gated by Arg-68 which contacts Glu-67 in an adjacent subunit; they are flexible enough to play a role in accommodating variations in shell assembly. The sequence is that of Bacterial microcompartment protein trimer-3 from Haliangium ochraceum (strain DSM 14365 / JCM 11303 / SMP-2).